A 247-amino-acid chain; its full sequence is Carboxy-S-adenosyl-L-methionine synthase (247 aa).

Residues Tyr40, 65–67 (GCS), 90–91 (DN), 122–123 (DI), Asn137, and Arg204 each bind S-adenosyl-L-methionine.

This sequence belongs to the class I-like SAM-binding methyltransferase superfamily. Cx-SAM synthase family. As to quaternary structure, homodimer.

The enzyme catalyses prephenate + S-adenosyl-L-methionine = carboxy-S-adenosyl-L-methionine + 3-phenylpyruvate + H2O. Its function is as follows. Catalyzes the conversion of S-adenosyl-L-methionine (SAM) to carboxy-S-adenosyl-L-methionine (Cx-SAM). This Pseudomonas syringae pv. tomato (strain ATCC BAA-871 / DC3000) protein is Carboxy-S-adenosyl-L-methionine synthase.